Consider the following 372-residue polypeptide: Putative aminopeptidase SgcX (372 aa).

Residues histidine 67 and aspartate 180 each coordinate a divalent metal cation. Residue glutamate 212 is the Proton acceptor of the active site. The a divalent metal cation site is built by glutamate 213, aspartate 235, and histidine 329.

Belongs to the peptidase M42 family. The cofactor is a divalent metal cation.

This is Putative aminopeptidase SgcX (sgcX) from Salmonella typhi.